A 69-amino-acid polypeptide reads, in one-letter code: uncharacterized protein (69 aa).

This is an uncharacterized protein from Bacillus anthracis.